The following is a 270-amino-acid chain: Phthiotriol/phenolphthiotriol dimycocerosates methyltransferase (270 aa).

This sequence belongs to the methyltransferase superfamily. Phthiotriol/phenolphthiotriol dimycocerosates methyltransferase family.

Functionally, catalyzes the methylation of the lipid moiety of the intermediate compounds phthiotriol and glycosylated phenolphthiotriol dimycoserosates to form phthiocerol dimycocerosates (DIM A) and glycosylated phenolphthiocerol dimycocerosates (PGL). This Mycobacterium bovis (strain ATCC BAA-935 / AF2122/97) protein is Phthiotriol/phenolphthiotriol dimycocerosates methyltransferase.